Consider the following 346-residue polypeptide: Autophagy-related protein 3 (346 aa).

The interval 85–161 is flexible region; sequence DFAGDAGHEE…DDDDEAIIRA (77 aa). Catalysis depends on Cys-238, which acts as the Glycyl thioester intermediate. The tract at residues 242–322 is handle region; the sequence is SVMKTLLDRA…DQEVAIRVDQ (81 aa).

It belongs to the ATG3 family. In terms of assembly, monomer. Interacts with apg-6/atg8 through an intermediate thioester bond through the C-terminal Gly of apg-6/atg8. Also interacts with the 40 amino acid C-terminal region of the E1-like apg-5/atg7 enzyme. Also interacts with the atg12-apg-4/atg5 conjugate.

Its subcellular location is the cytoplasm. Its function is as follows. E2 conjugating enzyme required for the cytoplasm to vacuole transport (Cvt) and autophagy. Required for selective autophagic degradation of the nucleus (nucleophagy) as well as for mitophagy which contributes to regulate mitochondrial quantity and quality by eliminating the mitochondria to a basal level to fulfill cellular energy requirements and preventing excess ROS production. Responsible for the E2-like covalent binding of phosphatidylethanolamine to the C-terminal Gly of apg-6/atg8. The atg12-apg-4/atg5 conjugate plays a role of an E3 and promotes the transfer of apg-6/atg8 from apg-3/atg3 to phosphatidylethanolamine (PE). This step is required for the membrane association of apg-6/atg8. The formation of the apg-6/atg8-phosphatidylethanolamine conjugate is essential for autophagy and for the cytoplasm to vacuole transport (Cvt). The apg-6/atg8-PE conjugate mediates tethering between adjacent membranes and stimulates membrane hemifusion, leading to expansion of the autophagosomal membrane during autophagy. The chain is Autophagy-related protein 3 (apg-3) from Neurospora crassa (strain ATCC 24698 / 74-OR23-1A / CBS 708.71 / DSM 1257 / FGSC 987).